The chain runs to 475 residues: MSPKTETKASVGFKAGVKDYRLTYYTPEYQTKDTDILAAFRVTPQPGVPAEEAGAAVAAESSTGTWTTVWTDGLTSLDRYKGRCYDIEPVPGEETQFIAYVAYPLDLFEEGSVTNLFTSIVGNVFGFKALRALRLEDLRIPPAYSKTFQGPPHGIQVERDKLNKYGRPLLGCTIKPKLGLSAKNYGRAVYECLRGGLDFTKDDENVNSQPFMRWRDRFVFCAEAIYKAQAETGEIKGHYLNATAGTCEEMMKRAVFARELGVPIVMHDYLTGGFTANTSLAHYCRDNGLLLHIHRAMHAVIDRQRNHGMHFRVLAKALRMSGGDHIHAGTVVGKLEGERDVTLGFVDLLRDDFIEKDRSRGIYFTQDWVSMPGVLPVASGGIHVWHMPALTEIFGDDSVLQFGGGTLGHPWGNAPGAVANRVALEACVQARNEGRDLAREGNEVIREACKWSPELAAACEIWKEIKFEFDVIDRL.

The propeptide occupies 1 to 2; it reads MS. The residue at position 3 (Pro3) is an N-acetylproline. Lys14 carries the post-translational modification N6,N6,N6-trimethyllysine. Residues Asn123 and Thr173 each coordinate substrate. Lys175 functions as the Proton acceptor in the catalytic mechanism. Lys177 lines the substrate pocket. Mg(2+)-binding residues include Lys201, Asp203, and Glu204. Residue Lys201 is modified to N6-carboxylysine. His294 serves as the catalytic Proton acceptor. The substrate site is built by Arg295, His327, and Ser379.

Belongs to the RuBisCO large chain family. Type I subfamily. In terms of assembly, heterohexadecamer of 8 large chains and 8 small chains; disulfide-linked. The disulfide link is formed within the large subunit homodimers. The cofactor is Mg(2+). The disulfide bond which can form in the large chain dimeric partners within the hexadecamer appears to be associated with oxidative stress and protein turnover.

The protein localises to the plastid. It is found in the chloroplast. The catalysed reaction is 2 (2R)-3-phosphoglycerate + 2 H(+) = D-ribulose 1,5-bisphosphate + CO2 + H2O. It catalyses the reaction D-ribulose 1,5-bisphosphate + O2 = 2-phosphoglycolate + (2R)-3-phosphoglycerate + 2 H(+). RuBisCO catalyzes two reactions: the carboxylation of D-ribulose 1,5-bisphosphate, the primary event in carbon dioxide fixation, as well as the oxidative fragmentation of the pentose substrate in the photorespiration process. Both reactions occur simultaneously and in competition at the same active site. The protein is Ribulose bisphosphate carboxylase large chain of Pinus longaeva (Great Basin bristlecone pine).